A 206-amino-acid polypeptide reads, in one-letter code: 2,3-bisphosphoglycerate-dependent phosphoglycerate mutase (206 aa).

Residues 9–16, 22–23, Arg61, 88–91, Lys99, 115–116, and 159–160 contribute to the substrate site; these read RHGQSEWN, TG, ERDY, RR, and GN. His10 functions as the Tele-phosphohistidine intermediate in the catalytic mechanism. Glu88 (proton donor/acceptor) is an active-site residue.

The protein belongs to the phosphoglycerate mutase family. BPG-dependent PGAM subfamily. In terms of assembly, homodimer.

It catalyses the reaction (2R)-2-phosphoglycerate = (2R)-3-phosphoglycerate. The protein operates within carbohydrate degradation; glycolysis; pyruvate from D-glyceraldehyde 3-phosphate: step 3/5. Functionally, catalyzes the interconversion of 2-phosphoglycerate and 3-phosphoglycerate. In Mesorhizobium japonicum (strain LMG 29417 / CECT 9101 / MAFF 303099) (Mesorhizobium loti (strain MAFF 303099)), this protein is 2,3-bisphosphoglycerate-dependent phosphoglycerate mutase.